The chain runs to 666 residues: Long-chain-fatty-acid--CoA ligase ACSBG2 (666 aa).

Residues 230-238 (TSGTTGIPK), 418-423 (ELYGLS), D496, and R624 contribute to the ATP site.

Belongs to the ATP-dependent AMP-binding enzyme family. Bubblegum subfamily. Testis-specific.

It is found in the cytoplasm. The protein localises to the membrane. It catalyses the reaction a long-chain fatty acid + ATP + CoA = a long-chain fatty acyl-CoA + AMP + diphosphate. The enzyme catalyses (5Z,8Z,11Z,14Z)-eicosatetraenoate + ATP + CoA = (5Z,8Z,11Z,14Z)-eicosatetraenoyl-CoA + AMP + diphosphate. The catalysed reaction is hexadecanoate + ATP + CoA = hexadecanoyl-CoA + AMP + diphosphate. It carries out the reaction (9Z)-octadecenoate + ATP + CoA = (9Z)-octadecenoyl-CoA + AMP + diphosphate. It catalyses the reaction (9Z,12Z)-octadecadienoate + ATP + CoA = (9Z,12Z)-octadecadienoyl-CoA + AMP + diphosphate. The enzyme catalyses tetracosanoate + ATP + CoA = tetracosanoyl-CoA + AMP + diphosphate. Catalyzes the conversion of fatty acids such as long chain and very long-chain fatty acids to their active form acyl-CoAs for both synthesis of cellular lipids, and degradation via beta-oxidation. Can activate diverse saturated, monosaturated and polyunsaturated fatty acids. Has increased ability to activate oleic and linoleic acid. May play a role in spermatogenesis. The protein is Long-chain-fatty-acid--CoA ligase ACSBG2 of Homo sapiens (Human).